We begin with the raw amino-acid sequence, 914 residues long: Thyroid peroxidase (914 aa).

Positions 1–31 (MRTLGAMAVMLVVMGTAIFLPFLLRSRDILG) are cleaved as a signal peptide. Over 32-834 (GKTMTSHVIS…TCIDSGRLPR (803 aa)) the chain is Extracellular. Residue Asn123 is glycosylated (N-linked (GlcNAc...) asparagine). The cysteines at positions 136 and 152 are disulfide-linked. Asp232 lines the heme b pocket. His233 (proton acceptor) is an active-site residue. Asp234 is a binding site for Ca(2+). 2 disulfides stabilise this stretch: Cys253/Cys263 and Cys257/Cys278. N-linked (GlcNAc...) asparagine glycosylation is found at Asn271 and Asn299. 4 residues coordinate Ca(2+): Thr313, Phe315, Asp317, and Ser319. N-linked (GlcNAc...) asparagine glycosylation occurs at Asn334. Positions 387 and 482 each coordinate heme b. Intrachain disulfides connect Cys586/Cys643, Cys684/Cys709, Cys730/Cys770, Cys756/Cys782, Cys788/Cys802, Cys796/Cys811, and Cys813/Cys826. N-linked (GlcNAc...) asparagine glycosylation occurs at Asn603. The 56-residue stretch at 728 to 783 (DKCVFPEKVDNGNFVHCEESGKLVLVYSCFHGYKLQGQEQVTCTQNGWDSEPPVCK) folds into the Sushi domain. The 44-residue stretch at 784 to 827 (DVNECADLTHPPCHSSAKCKNTKGSFQCVCTDPYMLGEDEKTCI) folds into the EGF-like; calcium-binding domain. A helical transmembrane segment spans residues 835–859 (ASWVSIALGALLIGGLASLSWTVIC). The Cytoplasmic segment spans residues 860–914 (RWTHADKKSTLLITERVTMESGFRKSQESGISPQKAEVQDAEQEPAYGSRVLLCE). The disordered stretch occupies residues 882–907 (FRKSQESGISPQKAEVQDAEQEPAYG).

This sequence belongs to the peroxidase family. XPO subfamily. As to quaternary structure, interacts with DUOX1, DUOX2 and CYBA. Ca(2+) serves as cofactor. The cofactor is heme b. In terms of processing, heme is covalently bound through a H(2)O(2)-dependent autocatalytic process. Heme insertion is important for the delivery of protein at the cell surface. Post-translationally, cleaved in its N-terminal part.

Its subcellular location is the membrane. It catalyses the reaction 2 iodide + H2O2 + 2 H(+) = diiodine + 2 H2O. The enzyme catalyses [thyroglobulin]-L-tyrosine + iodide + H2O2 + H(+) = [thyroglobulin]-3-iodo-L-tyrosine + 2 H2O. The catalysed reaction is [thyroglobulin]-3-iodo-L-tyrosine + iodide + H2O2 + H(+) = [thyroglobulin]-3,5-diiodo-L-tyrosine + 2 H2O. It carries out the reaction 2 [thyroglobulin]-3,5-diiodo-L-tyrosine + H2O2 = [thyroglobulin]-L-thyroxine + [thyroglobulin]-dehydroalanine + 2 H2O. It catalyses the reaction [thyroglobulin]-3-iodo-L-tyrosine + [thyroglobulin]-3,5-diiodo-L-tyrosine + H2O2 = [thyroglobulin]-3,3',5-triiodo-L-thyronine + [thyroglobulin]-dehydroalanine + 2 H2O. It functions in the pathway hormone biosynthesis; thyroid hormone biosynthesis. In terms of biological role, iodination and coupling of the hormonogenic tyrosines in thyroglobulin to yield the thyroid hormones T(3) and T(4). This is Thyroid peroxidase (Tpo) from Rattus norvegicus (Rat).